Reading from the N-terminus, the 185-residue chain is Ribosome-recycling factor (185 aa).

It belongs to the RRF family.

Its subcellular location is the cytoplasm. Its function is as follows. Responsible for the release of ribosomes from messenger RNA at the termination of protein biosynthesis. May increase the efficiency of translation by recycling ribosomes from one round of translation to another. The protein is Ribosome-recycling factor of Clostridium botulinum (strain Alaska E43 / Type E3).